Reading from the N-terminus, the 363-residue chain is 3-dehydroquinate synthase (363 aa).

Residues 72–77, 106–110, 130–131, Lys-142, and Lys-151 each bind NAD(+); these read SGEQSK, GVIGD, and TT. Positions 184, 246, and 263 each coordinate Zn(2+).

Belongs to the sugar phosphate cyclases superfamily. Dehydroquinate synthase family. Requires Co(2+) as cofactor. Zn(2+) serves as cofactor. It depends on NAD(+) as a cofactor.

It is found in the cytoplasm. The enzyme catalyses 7-phospho-2-dehydro-3-deoxy-D-arabino-heptonate = 3-dehydroquinate + phosphate. It functions in the pathway metabolic intermediate biosynthesis; chorismate biosynthesis; chorismate from D-erythrose 4-phosphate and phosphoenolpyruvate: step 2/7. In terms of biological role, catalyzes the conversion of 3-deoxy-D-arabino-heptulosonate 7-phosphate (DAHP) to dehydroquinate (DHQ). This Bacillus pumilus (strain SAFR-032) protein is 3-dehydroquinate synthase.